The following is a 422-amino-acid chain: Tyrosine--tRNA ligase (422 aa).

Residue tyrosine 34 participates in L-tyrosine binding. The short motif at 39–48 (PTEDSLHVGH) is the 'HIGH' region element. Tyrosine 172 and glutamine 176 together coordinate L-tyrosine. The 'KMSKS' region motif lies at 232–236 (KFGKT). Lysine 235 serves as a coordination point for ATP. The S4 RNA-binding domain occupies 354–412 (KDLQEALVLSSLAQSRTQAKNMIISNSISINTKKIVNKNYIIDDNDKLFNQFTLLSRGK).

The protein belongs to the class-I aminoacyl-tRNA synthetase family. TyrS type 1 subfamily. Homodimer.

The protein localises to the cytoplasm. The enzyme catalyses tRNA(Tyr) + L-tyrosine + ATP = L-tyrosyl-tRNA(Tyr) + AMP + diphosphate + H(+). Functionally, catalyzes the attachment of tyrosine to tRNA(Tyr) in a two-step reaction: tyrosine is first activated by ATP to form Tyr-AMP and then transferred to the acceptor end of tRNA(Tyr). The chain is Tyrosine--tRNA ligase from Buchnera aphidicola subsp. Schizaphis graminum (strain Sg).